The following is a 283-amino-acid chain: uncharacterized protein (283 aa).

Positions Glu-172–Gln-270 constitute an HTH araC/xylS-type domain. 2 consecutive DNA-binding regions (H-T-H motif) follow at residues Glu-189–Gly-210 and Val-237–Thr-260.

This is an uncharacterized protein from Escherichia coli (strain K12).